The sequence spans 27 residues: FAVGTESIAKTFSEALDTTKISDVLSK.

The protein belongs to the phosphoglycerate kinase family. In terms of assembly, monomer. Requires Mg(2+) as cofactor.

It catalyses the reaction (2R)-3-phosphoglycerate + ATP = (2R)-3-phospho-glyceroyl phosphate + ADP. The protein is Putative phosphoglycerate kinase of Pinus strobus (Eastern white pine).